A 481-amino-acid polypeptide reads, in one-letter code: Guanine nucleotide exchange factor C9orf72 (481 aa).

The uDENN C9ORF72-type domain occupies 23–194; it reads SPLLAATFAY…ELLSSMKSHS (172 aa). Residues 200–343 enclose the cDENN C9ORF72-type domain; that stretch reads DIADTVLNDD…SELTAFWRAT (144 aa). A dDENN C9ORF72-type domain is found at 370-464; that stretch reads VLHRDTLVKA…IKPGLHSFIF (95 aa). The tract at residues 461–481 is required for the homodimerization of the C9orf72-SMCR8 complex; sequence SFIFGRPFYTSVQERDVLMTF.

In terms of assembly, component of the C9orf72-SMCR8 complex, at least composed of C9orf72, SMCR8 and WDR41. The complex is formed of two protomers, each individually consisting of one molecule each of C9orf72, SMCR8 and WDR41. The protomers homodimerize via an interaction between C9orf72 (via C-terminus) and SMCR8 (via N-terminus). Within each protomer SMCR8 (via DENN domain) acts as a bridging protein between WDR41 (via C-terminus and N-terminus) and C9orf72 (via C-terminus). The C9orf72-SMCR8 complex associates with the ULK1/ATG1 kinase complex. Interacts with ULK1/ATG1 kinase complex members ULK1, ATG13 and RB1CC1. Interacts with SMCR8; the interaction is direct. Interacts with HNRNPA1, HNRNPA2B1 and UBQLN2. Interacts with small Rab GTPase RAB1A; the interaction mediates recruitment of RAB1A to the ULK1/ATG1 kinase complex. Also interacts with small Rab GTPase RAB7A. Interacts with cofilin. Interacts with GTP-binding proteins ARF1 and ARF6. Interacts with the DLG4/PSD-95. Interacts with CARM1 (via PH domain-like fold). Interacts with RAB39A and RAB39B (in GDP-bound forms); functions as GEF for RAB39A and RAB39B. Both isoforms are widely expressed, including kidney, lung, liver, heart, testis and several brain regions, such as cerebellum. Also expressed in the frontal cortex and in lymphoblasts (at protein level).

The protein localises to the cytoplasm. Its subcellular location is the nucleus. It localises to the P-body. It is found in the stress granule. The protein resides in the endosome. The protein localises to the lysosome. Its subcellular location is the cytoplasmic vesicle. It localises to the autophagosome. It is found in the autolysosome. The protein resides in the secreted. The protein localises to the cell projection. Its subcellular location is the axon. It localises to the growth cone. It is found in the perikaryon. The protein resides in the dendrite. The protein localises to the presynapse. Its subcellular location is the postsynapse. It localises to the nucleus membrane. In terms of biological role, acts as a guanine-nucleotide releasing factor (GEF) for Rab GTPases by promoting the conversion of inactive RAB-GDP to the active form RAB-GTP. Acts as a GEF for RAB39A which enables HOPS-mediated autophagosome-lysosome membrane tethering and fusion in mammalian autophagy. Component of the C9orf72-SMCR8 complex where both subunits display GEF activity and that regulates autophagy. As part of the C9orf72-SMCR8-WDR41 (CSW) complex, functions as GEF for RAB8A and RAB39B, thereby promoting autophagosome maturation. As part of the C9orf72-SMCR8 complex, also functions as GTPase activating protein (GAP) for RAB8A and RAB11A in vitro. The C9orf72-SMCR8 complex also acts as a regulator of autophagy initiation by interacting with the ULK1/ATG1 kinase complex and modulating its protein kinase activity. Promotes initiation of autophagy by regulating the RAB1A-dependent trafficking of the ULK1/ATG1 kinase complex to the phagophore which leads to autophagosome formation. Acts as a regulator of mTORC1 signaling by promoting phosphorylation of mTORC1 substrates. Plays a role in endosomal trafficking. May be involved in regulating the maturation of phagosomes to lysosomes. Promotes the lysosomal localization and lysosome-mediated degradation of CARM1 which leads to inhibition of starvation-induced lipid metabolism. Regulates actin dynamics in motor neurons by inhibiting the GTP-binding activity of ARF6, leading to ARF6 inactivation. This reduces the activity of the LIMK1 and LIMK2 kinases which are responsible for phosphorylation and inactivation of cofilin, leading to CFL1/cofilin activation. Positively regulates axon extension and axon growth cone size in spinal motor neurons. Required for SMCR8 protein expression and localization at pre- and post-synaptic compartments in the forebrain, also regulates protein abundance of RAB3A and GRIA1/GLUR1 in post-synaptic compartments in the forebrain and hippocampus. Plays a role within the hematopoietic system in restricting inflammation and the development of autoimmunity. Functionally, regulates stress granule assembly in response to cellular stress. Its function is as follows. Does not play a role in regulation of stress granule assembly in response to cellular stress. The polypeptide is Guanine nucleotide exchange factor C9orf72 (Homo sapiens (Human)).